The following is a 454-amino-acid chain: Bifunctional protein GlmU (454 aa).

The segment at 1–232 (MTDRTCLSIV…VDNVIGINNR (232 aa)) is pyrophosphorylase. Residues 11-14 (LAAG), Lys25, Gln78, and 83-84 (GT) contribute to the UDP-N-acetyl-alpha-D-glucosamine site. Asp108 lines the Mg(2+) pocket. UDP-N-acetyl-alpha-D-glucosamine-binding residues include Gly144, Glu158, Asn173, and Asn230. Asn230 serves as a coordination point for Mg(2+). The segment at 233-253 (VELAEAEAIWQQRKRREMMLA) is linker. The segment at 254–454 (GVTLIAPETV…AIKAAKTATK (201 aa)) is N-acetyltransferase. The UDP-N-acetyl-alpha-D-glucosamine site is built by Arg319 and Lys337. His349 serves as the catalytic Proton acceptor. UDP-N-acetyl-alpha-D-glucosamine-binding residues include Tyr352 and Asn363. Acetyl-CoA is bound by residues Ala366, 372 to 373 (NY), Ser391, Ser409, and Arg426.

This sequence in the N-terminal section; belongs to the N-acetylglucosamine-1-phosphate uridyltransferase family. It in the C-terminal section; belongs to the transferase hexapeptide repeat family. Homotrimer. Requires Mg(2+) as cofactor.

It is found in the cytoplasm. It carries out the reaction alpha-D-glucosamine 1-phosphate + acetyl-CoA = N-acetyl-alpha-D-glucosamine 1-phosphate + CoA + H(+). The catalysed reaction is N-acetyl-alpha-D-glucosamine 1-phosphate + UTP + H(+) = UDP-N-acetyl-alpha-D-glucosamine + diphosphate. Its pathway is nucleotide-sugar biosynthesis; UDP-N-acetyl-alpha-D-glucosamine biosynthesis; N-acetyl-alpha-D-glucosamine 1-phosphate from alpha-D-glucosamine 6-phosphate (route II): step 2/2. It functions in the pathway nucleotide-sugar biosynthesis; UDP-N-acetyl-alpha-D-glucosamine biosynthesis; UDP-N-acetyl-alpha-D-glucosamine from N-acetyl-alpha-D-glucosamine 1-phosphate: step 1/1. It participates in bacterial outer membrane biogenesis; LPS lipid A biosynthesis. Functionally, catalyzes the last two sequential reactions in the de novo biosynthetic pathway for UDP-N-acetylglucosamine (UDP-GlcNAc). The C-terminal domain catalyzes the transfer of acetyl group from acetyl coenzyme A to glucosamine-1-phosphate (GlcN-1-P) to produce N-acetylglucosamine-1-phosphate (GlcNAc-1-P), which is converted into UDP-GlcNAc by the transfer of uridine 5-monophosphate (from uridine 5-triphosphate), a reaction catalyzed by the N-terminal domain. The chain is Bifunctional protein GlmU from Brucella anthropi (strain ATCC 49188 / DSM 6882 / CCUG 24695 / JCM 21032 / LMG 3331 / NBRC 15819 / NCTC 12168 / Alc 37) (Ochrobactrum anthropi).